A 748-amino-acid polypeptide reads, in one-letter code: Protein REPRESSOR OF SILENCING 3 (748 aa).

In terms of domain architecture, RRM spans 10-86; sequence VRLHVGGLGE…GRLRLEKAKE (77 aa). Disordered regions lie at residues 244-318, 350-531, 579-600, and 729-748; these read KSIL…QSID, GSSK…VSDT, VDEE…GGSS, and EWAK…NSEE. Positions 266-288 are enriched in polar residues; it reads THPSKNRQTISLEETGRQESSQA. Positions 294–314 are enriched in basic and acidic residues; that stretch reads KPSEVVPDKSSDEPSRTKDLE. A compositionally biased stretch (basic residues) spans 373–382; the sequence is LKKKTKRKRV. 3 stretches are compositionally biased toward acidic residues: residues 403-416, 439-472, and 491-518; these read DTMA…DSDA, DDSD…DAVE, and ESDD…DVGS. Positions 520–531 are enriched in polar residues; that stretch reads DSGSLADTVSDT.

Ubiquitously expressed.

It is found in the nucleus. The protein localises to the nucleolus. Its subcellular location is the nucleoplasm. Functionally, RNA-binding protein required for DNA demethylation and to eluviate siRNA-mediated transcriptional gene silencing (TGS), probably by guiding ROS1. Can bind specifically single stranded G-rich RNAs of 21-, 24- or 26-nt corresponding to promoter sequence of target genes; this interaction directs demethylation of target sequences. This Arabidopsis thaliana (Mouse-ear cress) protein is Protein REPRESSOR OF SILENCING 3.